The primary structure comprises 520 residues: GMP synthase [glutamine-hydrolyzing] (520 aa).

The 194-residue stretch at 9–202 (TILIIDFGSQ…VHRIVGVKPG (194 aa)) folds into the Glutamine amidotransferase type-1 domain. Catalysis depends on cysteine 86, which acts as the Nucleophile. Residues histidine 176 and glutamate 178 contribute to the active site. The region spanning 203-395 (WTMGAYREQA…LGLPDSFIGR (193 aa)) is the GMPS ATP-PPase domain. Position 230–236 (230–236 (SGGVDSS)) interacts with ATP.

Homodimer.

It carries out the reaction XMP + L-glutamine + ATP + H2O = GMP + L-glutamate + AMP + diphosphate + 2 H(+). The protein operates within purine metabolism; GMP biosynthesis; GMP from XMP (L-Gln route): step 1/1. In terms of biological role, catalyzes the synthesis of GMP from XMP. The chain is GMP synthase [glutamine-hydrolyzing] from Brucella melitensis biotype 2 (strain ATCC 23457).